The following is a 271-amino-acid chain: Shikimate dehydrogenase (NADP(+)) (271 aa).

Shikimate contacts are provided by residues 14 to 16 (SRS) and Thr61. Lys65 acts as the Proton acceptor in catalysis. Shikimate is bound by residues Asn86 and Asp102. NADP(+)-binding positions include 126 to 130 (GAGGA), 149 to 154 (NRTFSR), and Met213. Tyr215 serves as a coordination point for shikimate. Gly238 contributes to the NADP(+) binding site.

Belongs to the shikimate dehydrogenase family. As to quaternary structure, homodimer.

It carries out the reaction shikimate + NADP(+) = 3-dehydroshikimate + NADPH + H(+). Its pathway is metabolic intermediate biosynthesis; chorismate biosynthesis; chorismate from D-erythrose 4-phosphate and phosphoenolpyruvate: step 4/7. Functionally, involved in the biosynthesis of the chorismate, which leads to the biosynthesis of aromatic amino acids. Catalyzes the reversible NADPH linked reduction of 3-dehydroshikimate (DHSA) to yield shikimate (SA). This Histophilus somni (strain 129Pt) (Haemophilus somnus) protein is Shikimate dehydrogenase (NADP(+)).